The primary structure comprises 499 residues: Phenylalanine--tRNA ligase alpha subunit (499 aa).

L-phenylalanine-binding positions include Thr-342, 381-383, and Phe-422; that span reads QID. Residue Glu-424 participates in Mg(2+) binding. Residue Phe-447 coordinates L-phenylalanine.

Belongs to the class-II aminoacyl-tRNA synthetase family. Phe-tRNA synthetase alpha subunit type 2 subfamily. Tetramer of two alpha and two beta subunits. Mg(2+) serves as cofactor.

Its subcellular location is the cytoplasm. It carries out the reaction tRNA(Phe) + L-phenylalanine + ATP = L-phenylalanyl-tRNA(Phe) + AMP + diphosphate + H(+). This is Phenylalanine--tRNA ligase alpha subunit from Pyrococcus horikoshii (strain ATCC 700860 / DSM 12428 / JCM 9974 / NBRC 100139 / OT-3).